The following is a 128-amino-acid chain: Transcription antitermination protein NusB (128 aa).

This sequence belongs to the NusB family.

Functionally, involved in transcription antitermination. Required for transcription of ribosomal RNA (rRNA) genes. Binds specifically to the boxA antiterminator sequence of the ribosomal RNA (rrn) operons. The sequence is that of Transcription antitermination protein NusB from Listeria innocua serovar 6a (strain ATCC BAA-680 / CLIP 11262).